Here is a 204-residue protein sequence, read N- to C-terminus: MSIKYVATSKLPTPWGVFAMHGFEDTESGKEHVALTFGTLSADEPVLGRIHSECLTGDALFSLRCDCGFQLQAAMQNIAETGSGFILYLRQEGRGIGLLNKIRAYELQDKGANTVEANEQLGFEADMRKYDMIKPMLEQIGVKHVRLMTNNPRKVKAMKEFGIEVVERVPLQVGKNRYNEAYLKTKSTELGHMMSEYHFMDENK.

49–53 is a GTP binding site; the sequence is RIHSE. Zn(2+) is bound by residues cysteine 54, cysteine 65, and cysteine 67. Residues glutamine 70, 92–94, and threonine 114 contribute to the GTP site; that span reads EGR. The Proton acceptor role is filled by aspartate 126. Arginine 128 serves as the catalytic Nucleophile. Threonine 149 and lysine 154 together coordinate GTP.

This sequence belongs to the GTP cyclohydrolase II family. Zn(2+) is required as a cofactor.

The enzyme catalyses GTP + 4 H2O = 2,5-diamino-6-hydroxy-4-(5-phosphoribosylamino)-pyrimidine + formate + 2 phosphate + 3 H(+). It participates in cofactor biosynthesis; riboflavin biosynthesis; 5-amino-6-(D-ribitylamino)uracil from GTP: step 1/4. Its function is as follows. Catalyzes the conversion of GTP to 2,5-diamino-6-ribosylamino-4(3H)-pyrimidinone 5'-phosphate (DARP), formate and pyrophosphate. This Shewanella baltica (strain OS223) protein is GTP cyclohydrolase-2.